The primary structure comprises 380 residues: Glucose-1-phosphate adenylyltransferase (380 aa).

Alpha-D-glucose 1-phosphate-binding positions include G164, 179–180, and S190; that span reads EK.

This sequence belongs to the bacterial/plant glucose-1-phosphate adenylyltransferase family. As to quaternary structure, homotetramer.

It catalyses the reaction alpha-D-glucose 1-phosphate + ATP + H(+) = ADP-alpha-D-glucose + diphosphate. Its pathway is glycan biosynthesis; glycogen biosynthesis. Involved in the biosynthesis of ADP-glucose, a building block required for the elongation reactions to produce glycogen. Catalyzes the reaction between ATP and alpha-D-glucose 1-phosphate (G1P) to produce pyrophosphate and ADP-Glc. The sequence is that of Glucose-1-phosphate adenylyltransferase from Ligilactobacillus salivarius (strain UCC118) (Lactobacillus salivarius).